The primary structure comprises 692 residues: NADH-ubiquinone oxidoreductase chain 5 (692 aa).

The next 17 membrane-spanning stretches (helical) occupy residues 5-23 (IIIL…GRKV), 30-52 (ILGC…EVGF), 81-103 (LTVS…SIGY), 112-129 (RFFS…ILVT), 133-155 (YLLM…SFWF), 168-190 (FLTN…WSLG), 200-222 (LAPY…GAMA), 243-262 (VSAL…LLIR), 272-294 (TVLL…IGLF), 301-319 (IIAY…AIGL), 329-351 (LINH…HAVV), 364-386 (SFLP…FPFM), 409-431 (NVYF…VIYL), 452-471 (IFLS…FGYL), 511-528 (LLPF…IVYY), 535-557 (VVDF…RFLV), and 615-637 (YALY…SIFF).

It belongs to the complex I subunit 5 family.

The protein localises to the mitochondrion inner membrane. It catalyses the reaction a ubiquinone + NADH + 5 H(+)(in) = a ubiquinol + NAD(+) + 4 H(+)(out). Functionally, core subunit of the mitochondrial membrane respiratory chain NADH dehydrogenase (Complex I) that is believed to belong to the minimal assembly required for catalysis. Complex I functions in the transfer of electrons from NADH to the respiratory chain. The immediate electron acceptor for the enzyme is believed to be ubiquinone. The polypeptide is NADH-ubiquinone oxidoreductase chain 5 (nd5) (Hypocrea jecorina (Trichoderma reesei)).